A 60-amino-acid polypeptide reads, in one-letter code: MAVQQNKKSPSKRGMHRSHNALVVPGIAVEPTTGETHLRHHISPNGFYRGRQVLKNKSEA.

Disordered regions lie at residues 1–22 (MAVQ…HNAL) and 34–60 (GETH…KSEA). Over residues 9 to 19 (SPSKRGMHRSH) the composition is skewed to basic residues.

The protein belongs to the bacterial ribosomal protein bL32 family.

This Variovorax paradoxus (strain S110) protein is Large ribosomal subunit protein bL32.